The chain runs to 519 residues: S-type anion channel SLAH2 (519 aa).

The interval 1–31 is disordered; it reads MNNPRSVSPLVSPANHSDLLENQRQSGSGDF. Topologically, residues 1–140 are cytoplasmic; the sequence is MNNPRSVSPL…LPEDKTWPFL (140 aa). Positions 20–29 are enriched in polar residues; sequence LENQRQSGSG. Phosphoserine occurs at positions 77 and 85. Residues 141-161 traverse the membrane as a helical segment; that stretch reads LRFPITSYGMCLGVSSQAIMW. At 162 to 185 the chain is on the extracellular side; it reads KTLATTEAEKFLHVTQVINHVLWW. Residues 186–206 form a helical membrane-spanning segment; it reads ISLLLLLAVSITYLFKTILFF. Residues 207–220 are Cytoplasmic-facing; sequence EAVRREFRHPIRVN. A helical membrane pass occupies residues 221–241; it reads FFFAPLISILFLALGIPHSII. The Extracellular segment spans residues 242–247; sequence SHLPST. A helical transmembrane segment spans residues 248-268; the sequence is LWYFLMAPILFLEMKIYGQWM. Residues 269–281 are Cytoplasmic-facing; that stretch reads SGGQRRLSKVANP. The helical transmembrane segment at 282-302 threads the bilayer; that stretch reads TNHLSIVGNFAGALLGASMGL. Topologically, residues 303-304 are extracellular; the sequence is KE. A helical transmembrane segment spans residues 305-325; that stretch reads GPIFFFAIGLAYYLVLFVTLY. At 326-340 the chain is on the cytoplasmic side; it reads QRLPTNETLPKELHP. Residues 341-361 form a helical membrane-spanning segment; the sequence is VFFLFVAAPAVASMAWTKISA. Residue Ser-362 is a topological domain, extracellular. Residues 363–383 traverse the membrane as a helical segment; it reads FDLGSRLAYFISLFLYFSLVC. Topologically, residues 384 to 389 are cytoplasmic; the sequence is RINLFR. The helical transmembrane segment at 390–410 threads the bilayer; sequence GFKFSLAWWAYTFPMTAVASA. Residues 411-424 are Extracellular-facing; the sequence is TIKYSDEVTGVATK. The helical transmembrane segment at 425-445 threads the bilayer; the sequence is ILSVVMSGAATLTVIAVLGLT. Over 446-519 the chain is Cytoplasmic; that stretch reads VMHAFVQRDL…VDSSTVQNSN (74 aa). The disordered stretch occupies residues 495-519; that stretch reads PEDNQIDLESPPLVNVDSSTVQNSN. Residues 510–519 show a composition bias toward polar residues; the sequence is VDSSTVQNSN.

This sequence belongs to the SLAC1 S-type anion channel family. Homotrimer. Expressed in lateral root primordia and tap root tips.

It localises to the cell membrane. In terms of biological role, slow, weak voltage-dependent S-type anion efflux channel involved in maintenance of anion homeostasis. The polypeptide is S-type anion channel SLAH2 (SLAH2) (Arabidopsis thaliana (Mouse-ear cress)).